The primary structure comprises 836 residues: Protein translocase subunit SecA (836 aa).

Residues Gln85, 103-107 (GEGKT), and Asp492 each bind ATP. 4 residues coordinate Zn(2+): Cys820, Cys822, Cys831, and Cys832.

Belongs to the SecA family. As to quaternary structure, monomer and homodimer. Part of the essential Sec protein translocation apparatus which comprises SecA, SecYEG and auxiliary proteins SecDF. Other proteins may also be involved. Zn(2+) is required as a cofactor.

The protein resides in the cell membrane. It is found in the cytoplasm. The catalysed reaction is ATP + H2O + cellular proteinSide 1 = ADP + phosphate + cellular proteinSide 2.. Functionally, part of the Sec protein translocase complex. Interacts with the SecYEG preprotein conducting channel. Has a central role in coupling the hydrolysis of ATP to the transfer of proteins into and across the cell membrane, serving as an ATP-driven molecular motor driving the stepwise translocation of polypeptide chains across the membrane. This is Protein translocase subunit SecA from Clostridium botulinum (strain Eklund 17B / Type B).